A 95-amino-acid polypeptide reads, in one-letter code: uncharacterized protein (95 aa).

An N-terminal signal peptide occupies residues 1 to 21 (MKVLSISLIFFALLLTGCSQV).

This is an uncharacterized protein from Archaeoglobus fulgidus (strain ATCC 49558 / DSM 4304 / JCM 9628 / NBRC 100126 / VC-16).